The primary structure comprises 501 residues: Symplectin (501 aa).

Positions 20–287 (PKTDMETREE…SKLLVAEILP (268 aa)) constitute a CN hydrolase domain. The active-site Proton acceptor is the Glu-60. Lys-163 (proton donor) is an active-site residue. The Nucleophile role is filled by Cys-196. At Cys-390 the chain carries S-(coelenterazin-3a-yl)cysteine.

It belongs to the carbon-nitrogen hydrolase superfamily. BTD/VNN family. Photogenic gland (at protein level).

Monovalent ion-dependent bioluminescence photoprotein. Displays an emission peak at 470 nm (blue light). Trace amounts of monovalent ion trigger the intramolecular oxidation of the chromophore, didehydrocoelenterazine, with the emission of light. This Sthenoteuthis oualaniensis (Purpleback flying squid) protein is Symplectin.